The chain runs to 610 residues: Glutamine--fructose-6-phosphate aminotransferase [isomerizing] (610 aa).

The active-site Nucleophile; for GATase activity is Cys2. A Glutamine amidotransferase type-2 domain is found at 2 to 221; it reads CGIVGAVAQR…DGDVVDLQLA (220 aa). 2 consecutive SIS domains span residues 286 to 426 and 459 to 600; these read AYKV…TRGR and WADR…VDKP. The For Fru-6P isomerization activity role is filled by Lys605.

Homodimer.

Its subcellular location is the cytoplasm. It carries out the reaction D-fructose 6-phosphate + L-glutamine = D-glucosamine 6-phosphate + L-glutamate. Its function is as follows. Catalyzes the first step in hexosamine metabolism, converting fructose-6P into glucosamine-6P using glutamine as a nitrogen source. The chain is Glutamine--fructose-6-phosphate aminotransferase [isomerizing] from Bordetella pertussis (strain Tohama I / ATCC BAA-589 / NCTC 13251).